Reading from the N-terminus, the 651-residue chain is Probable inactive purple acid phosphatase 9 (651 aa).

The signal sequence occupies residues 1–20; it reads MIAAVYTLFFFFLLISSVYS. 3 N-linked (GlcNAc...) asparagine glycosylation sites follow: Asn32, Asn96, and Asn202. The Fe cation site is built by Asp305 and Tyr308. Asp305 is a binding site for Zn(2+). Asn338 is a binding site for Zn(2+). A substrate-binding site is contributed by Asn338. N-linked (GlcNAc...) asparagine glycosylation is found at Asn378 and Asn432. Residue His444 participates in Zn(2+) binding. Asn475 carries N-linked (GlcNAc...) asparagine glycosylation. His483 contacts Zn(2+). 483–485 provides a ligand contact to substrate; sequence HVH. His485 is a Fe cation binding site. N-linked (GlcNAc...) asparagine glycans are attached at residues Asn495 and Asn640.

This sequence belongs to the metallophosphoesterase superfamily. Purple acid phosphatase family. As to quaternary structure, homodimer. Fe cation serves as cofactor. Requires Zn(2+) as cofactor. In terms of tissue distribution, expressed in roots, stems, leaves, flowers and siliques.

The protein resides in the secreted. The chain is Probable inactive purple acid phosphatase 9 (PAP9) from Arabidopsis thaliana (Mouse-ear cress).